Here is a 308-residue protein sequence, read N- to C-terminus: Adult enhancer factor 1 (308 aa).

Disordered stretches follow at residues 50–94 (AHMA…PLPF) and 123–143 (QAAAAEQQQPPPPTSHLTHLT). Low complexity predominate over residues 56 to 76 (QQQQQQQQQQQQQHHQQQQQQ). Pro residues predominate over residues 81-90 (PSVPPPPTEL). C2H2-type zinc fingers lie at residues 184-206 (FHCTVCDRRFRQLSTLTNHVKIH), 212-234 (YKCNVCDKTFRQSSTLTNHLKIH), 240-262 (YNCNFCPKHFRQLSTLANHVKIH), and 268-290 (FECVICKKQFRQSSTLNNHIKIH).

In terms of tissue distribution, found in all tissues examined including the ovary and the fat body.

The protein resides in the nucleus. Functionally, transcriptional repressor that binds specifically to fat body-specific enhancers, namely the adult ADH enhancer (AAE) and the enhancer that controls yolk protein gene expression. The polypeptide is Adult enhancer factor 1 (Aef1) (Drosophila melanogaster (Fruit fly)).